Reading from the N-terminus, the 115-residue chain is NAD(P)H-quinone oxidoreductase subunit M (115 aa).

The protein belongs to the complex I NdhM subunit family. NDH-1 can be composed of about 15 different subunits; different subcomplexes with different compositions have been identified which probably have different functions.

The protein resides in the cellular thylakoid membrane. The catalysed reaction is a plastoquinone + NADH + (n+1) H(+)(in) = a plastoquinol + NAD(+) + n H(+)(out). It carries out the reaction a plastoquinone + NADPH + (n+1) H(+)(in) = a plastoquinol + NADP(+) + n H(+)(out). Its function is as follows. NDH-1 shuttles electrons from an unknown electron donor, via FMN and iron-sulfur (Fe-S) centers, to quinones in the respiratory and/or the photosynthetic chain. The immediate electron acceptor for the enzyme in this species is believed to be plastoquinone. Couples the redox reaction to proton translocation, and thus conserves the redox energy in a proton gradient. Cyanobacterial NDH-1 also plays a role in inorganic carbon-concentration. The sequence is that of NAD(P)H-quinone oxidoreductase subunit M from Prochlorococcus marinus subsp. pastoris (strain CCMP1986 / NIES-2087 / MED4).